Here is a 387-residue protein sequence, read N- to C-terminus: Succinate--CoA ligase [ADP-forming] subunit beta (387 aa).

Residues 9 to 245 (KDLLESYGLK…KSQENAKELK (237 aa)) form the ATP-grasp domain. ATP is bound by residues K46, 53-55 (GRG), E100, Y103, and E108. Mg(2+) contacts are provided by N200 and D214. Substrate contacts are provided by residues N265 and 322-324 (GIV).

The protein belongs to the succinate/malate CoA ligase beta subunit family. In terms of assembly, heterotetramer of two alpha and two beta subunits. Mg(2+) is required as a cofactor.

It catalyses the reaction succinate + ATP + CoA = succinyl-CoA + ADP + phosphate. The enzyme catalyses GTP + succinate + CoA = succinyl-CoA + GDP + phosphate. It participates in carbohydrate metabolism; tricarboxylic acid cycle; succinate from succinyl-CoA (ligase route): step 1/1. Its function is as follows. Succinyl-CoA synthetase functions in the citric acid cycle (TCA), coupling the hydrolysis of succinyl-CoA to the synthesis of either ATP or GTP and thus represents the only step of substrate-level phosphorylation in the TCA. The beta subunit provides nucleotide specificity of the enzyme and binds the substrate succinate, while the binding sites for coenzyme A and phosphate are found in the alpha subunit. This Francisella tularensis subsp. holarctica (strain FTNF002-00 / FTA) protein is Succinate--CoA ligase [ADP-forming] subunit beta.